The following is a 644-amino-acid chain: Chaperone protein DnaK (644 aa).

2 disordered regions span residues 490-533 (QEEA…ELDD) and 570-644 (EELQ…EDDA). The segment covering 492–513 (EAEKHKEEDEARRERIEARNEA) has biased composition (basic and acidic residues). A compositionally biased stretch (acidic residues) spans 523-533 (LLEENEEELDD). The segment covering 588–622 (GPGGAGGAAGAGPGGMGGMGGAAGPGGAGGAGPGG) has biased composition (gly residues). A compositionally biased stretch (acidic residues) spans 624 to 644 (DADDEEYVDADFEDVDDEDDA).

Belongs to the heat shock protein 70 family.

Acts as a chaperone. This Halorubrum lacusprofundi (strain ATCC 49239 / DSM 5036 / JCM 8891 / ACAM 34) protein is Chaperone protein DnaK.